Consider the following 181-residue polypeptide: uncharacterized protein (181 aa).

In terms of domain architecture, N-acetyltransferase spans 1 to 159 (MTVHHFTFHI…KACWMMQSLT (159 aa)).

This sequence belongs to the acetyltransferase family.

This is an uncharacterized protein from Escherichia coli (strain K12).